A 337-amino-acid chain; its full sequence is Tryptophan--tRNA ligase (337 aa).

Residues 9–11 and 17–18 contribute to the ATP site; these read RPT and GH. Residues 10–18 carry the 'HIGH' region motif; that stretch reads PTGRLHLGH. Residue Asp137 coordinates L-tryptophan. Residues 149 to 151, Leu187, and 195 to 199 each bind ATP; these read GKD and KMSKS. The 'KMSKS' region motif lies at 195 to 199; it reads KMSKS.

It belongs to the class-I aminoacyl-tRNA synthetase family. As to quaternary structure, homodimer.

It localises to the cytoplasm. The enzyme catalyses tRNA(Trp) + L-tryptophan + ATP = L-tryptophyl-tRNA(Trp) + AMP + diphosphate + H(+). Catalyzes the attachment of tryptophan to tRNA(Trp). The chain is Tryptophan--tRNA ligase from Treponema pallidum (strain Nichols).